We begin with the raw amino-acid sequence, 249 residues long: Isoprenyl transferase (249 aa).

Asp-25 is a catalytic residue. Residue Asp-25 participates in Mg(2+) binding. Substrate-binding positions include 26 to 29 (GNGR), Trp-30, Arg-38, His-42, and 70 to 72 (STE). The Proton acceptor role is filled by Asn-73. Substrate is bound by residues Trp-74, Arg-76, Arg-197, and 203-205 (RLS). Glu-216 lines the Mg(2+) pocket.

It belongs to the UPP synthase family. Homodimer. Requires Mg(2+) as cofactor.

In terms of biological role, catalyzes the condensation of isopentenyl diphosphate (IPP) with allylic pyrophosphates generating different type of terpenoids. This chain is Isoprenyl transferase, found in Streptococcus thermophilus (strain CNRZ 1066).